Reading from the N-terminus, the 289-residue chain is 5'-adenylylsulfate reductase-like 7 (289 aa).

The signal sequence occupies residues 1–23; the sequence is MNLWVSIFLVSAIAGSCLPSGFA. Positions 37-157 constitute a Thioredoxin domain; it reads SVIEQKCPRS…LIQFYKETTG (121 aa). N-linked (GlcNAc...) asparagine glycosylation is found at Asn-132 and Asn-184. The helical transmembrane segment at 198-218 threads the bilayer; the sequence is MVLALMFLSLKLAILIFPIMG.

It is found in the membrane. This chain is 5'-adenylylsulfate reductase-like 7 (APRL7), found in Arabidopsis thaliana (Mouse-ear cress).